The primary structure comprises 208 residues: MSLFITFEGGEGCGKSTQSKALYRYLKKLGLGCVLTHEPGGSKSGDKITRLLKWSKEEHISPLTELLLFNASRSILIDNVIKPALQDGKIVICDRYTDSTLAYQGYGRGLDLDTVKCVNSLASGGLVPDLTIWLDMDDKAALLRKGELPPDRFESENNGFHQRVRNGFGAIYATEPDRFLKLDASLPQSEIFSRIKQRVTILLGCRNE.

An ATP-binding site is contributed by 9-16; it reads GGEGCGKS.

It belongs to the thymidylate kinase family.

It carries out the reaction dTMP + ATP = dTDP + ADP. Its function is as follows. Phosphorylation of dTMP to form dTDP in both de novo and salvage pathways of dTTP synthesis. The chain is Thymidylate kinase from Dehalococcoides mccartyi (strain CBDB1).